The chain runs to 206 residues: Transmembrane emp24 domain-containing protein bai (206 aa).

Positions 1-20 are cleaved as a signal peptide; the sequence is MMKAILATLAIFGCIWPGQS. The Lumenal segment spans residues 21-172; it reads VMFHLTPNTQ…RDTNEKTNSR (152 aa). The 111-residue stretch at 30–140 folds into the GOLD domain; that stretch reads QKCLKEDIQA…LKPLEVDLKR (111 aa). Residues 173–193 form a helical membrane-spanning segment; that stretch reads VLFFSIFSMCCLLGLATWQVL. At 194–206 the chain is on the cytoplasmic side; the sequence is YLRRYFKAKKLIE.

Belongs to the EMP24/GP25L family.

The protein localises to the membrane. In terms of biological role, eca and bai are essential, though not redundant, for dorsoventral patterning of the embryo. Specifically required during early embryogenesis for the activity of maternal tkv, while the zygotic tkv is not affected. The sequence is that of Transmembrane emp24 domain-containing protein bai from Drosophila willistoni (Fruit fly).